Here is a 562-residue protein sequence, read N- to C-terminus: Tetratricopeptide repeat protein 39A (562 aa).

TPR repeat units lie at residues 273–306 (AIFLFFAGRIEEIKGNIDEAISRFEECCESQQNW), 463–496 (CVVKLLKGLCYKYLGRIPEAVESFSYIQLNEKRI), and 504–537 (PNAMLELALLYLQLEKKEEALRLLENAKNNYKNY).

Belongs to the TTC39 family.

In Xenopus tropicalis (Western clawed frog), this protein is Tetratricopeptide repeat protein 39A (ttc39a).